A 101-amino-acid chain; its full sequence is uncharacterized protein (101 aa).

A helical transmembrane segment spans residues 13 to 33 (FISIMCLFSIPLCFSLSIFFF).

It is found in the membrane. This is an uncharacterized protein from Schizosaccharomyces pombe (strain 972 / ATCC 24843) (Fission yeast).